Reading from the N-terminus, the 170-residue chain is Alpha-crystallin A chain (170 aa).

The residue at position 1 (M1) is an N-acetylmethionine. The interval 1 to 63 (MDVTIQQPWF…RTALDSGISE (63 aa)) is required for complex formation with BFSP1 and BFSP2. The residue at position 6 (Q6) is a Deamidated glutamine; partial. S45 is subject to Phosphoserine. A Deamidated glutamine; partial modification is found at Q50. The sHSP domain occupies 52 to 161 (LFRTALDSGI…SERPIPVSRE (110 aa)). Residues K70 and K99 each carry the N6-acetyllysine modification. H100 provides a ligand contact to Zn(2+). Residue N101 is modified to Deamidated asparagine; partial. E102, H107, and H151 together coordinate Zn(2+). A disordered region spans residues 144–170 (PKIVDPSHSERPIPVSREEKPSSAPSS). The segment covering 148 to 164 (DPSHSERPIPVSREEKP) has biased composition (basic and acidic residues). S159 carries O-linked (GlcNAc) serine glycosylation.

The protein belongs to the small heat shock protein (HSP20) family. Heteromer composed of three CRYAA and one CRYAB subunits. Inter-subunit bridging via zinc ions enhances stability, which is crucial as there is no protein turn over in the lens. Can also form homodimers and homotetramers (dimers of dimers) which serve as the building blocks of homooligomers. Within homooligomers, the zinc-binding motif is created from residues of 3 different molecules. His-100 and Glu-102 from one molecule are ligands of the zinc ion, and His-107 and His-151 residues from additional molecules complete the site with tetrahedral coordination geometry. Part of a complex required for lens intermediate filament formation composed of BFSP1, BFSP2 and CRYAA. Acetylation at Lys-70 may increase chaperone activity. In terms of processing, undergoes age-dependent proteolytical cleavage at the C-terminus.

The protein localises to the cytoplasm. The protein resides in the nucleus. Contributes to the transparency and refractive index of the lens. Acts as a chaperone, preventing aggregation of various proteins under a wide range of stress conditions. Required for the correct formation of lens intermediate filaments as part of a complex composed of BFSP1, BFSP2 and CRYAA. The protein is Alpha-crystallin A chain (CRYAA) of Bradypus variegatus (Brown-throated three-fingered sloth).